The following is a 348-amino-acid chain: MVTASESWPQLLEQLLVGNVLSKENAAALMEAWLAEELTPVQTGAFLAAFRARDVQGSELAAMAEVLRKACALPDAKPNLGLVDTCGTGGDGADTFNISTAVAFTAAACGAHVAKHGNRSASGKVGSADVLEGLGLHLKAPLESVLGALPASGVTFLFAPAWHPALVNLAPLRRSLGVRTVFNLLGPLVNPLTPEAQVLGVAKAELLDPMAEALQQLGLTRAVVVHGAGGLDEASLEGPNEVRILENGNVRSDQLSASDFGLTLAPLEALRGGDLVTNQQILEAVLKGEAPDAHRDAVALNTALVLWAAGVQSDLSEGVKQALTSLEEGQPWHRLVSLRDALEGRKEE.

Residues glycine 87, 90-91 (GD), threonine 95, 97-100 (NIST), 115-123 (KHGNRSASG), and serine 127 contribute to the 5-phospho-alpha-D-ribose 1-diphosphate site. An anthranilate-binding site is contributed by glycine 87. Serine 99 contacts Mg(2+). Asparagine 118 is an anthranilate binding site. Residue arginine 173 coordinates anthranilate. Mg(2+) contacts are provided by aspartate 232 and glutamate 233.

This sequence belongs to the anthranilate phosphoribosyltransferase family. As to quaternary structure, homodimer. Requires Mg(2+) as cofactor.

The enzyme catalyses N-(5-phospho-beta-D-ribosyl)anthranilate + diphosphate = 5-phospho-alpha-D-ribose 1-diphosphate + anthranilate. The protein operates within amino-acid biosynthesis; L-tryptophan biosynthesis; L-tryptophan from chorismate: step 2/5. Its function is as follows. Catalyzes the transfer of the phosphoribosyl group of 5-phosphorylribose-1-pyrophosphate (PRPP) to anthranilate to yield N-(5'-phosphoribosyl)-anthranilate (PRA). This Synechococcus sp. (strain CC9311) protein is Anthranilate phosphoribosyltransferase.